The sequence spans 291 residues: Sulfotransferase 1A1 (291 aa).

Lys44–Trp49 is a binding site for 3'-phosphoadenylyl sulfate. Lys102 to His104 is a substrate binding site. The active-site Proton acceptor is the His104. 3'-phosphoadenylyl sulfate contacts are provided by residues Arg126, Ser134, Tyr189, Thr223–Met228, and Phe251–Gly255. At Ser134 the chain carries Phosphoserine.

Belongs to the sulfotransferase 1 family. In terms of assembly, homodimer. Expressed in brain, colon, liver, and small intestine of mice colonized with B.ovatus and L.plantarum.

The protein localises to the cytoplasm. The enzyme catalyses a phenol + 3'-phosphoadenylyl sulfate = an aryl sulfate + adenosine 3',5'-bisphosphate + H(+). It carries out the reaction 17beta-estradiol + 3'-phosphoadenylyl sulfate = 17beta-estradiol 3-sulfate + adenosine 3',5'-bisphosphate + H(+). It catalyses the reaction 4-ethylphenol + 3'-phosphoadenylyl sulfate = 4-ethylphenyl sulfate + adenosine 3',5'-bisphosphate + H(+). The catalysed reaction is 4-nitrophenol + 3'-phosphoadenylyl sulfate = 4-nitrophenyl sulfate + adenosine 3',5'-bisphosphate. The enzyme catalyses dopamine + 3'-phosphoadenylyl sulfate = dopamine 3-O-sulfate + adenosine 3',5'-bisphosphate + H(+). It carries out the reaction dopamine + 3'-phosphoadenylyl sulfate = dopamine 4-O-sulfate + adenosine 3',5'-bisphosphate + H(+). It catalyses the reaction 3,3',5-triiodo-L-thyronine + 3'-phosphoadenylyl sulfate = 3,3',5-triiodo-L-thyronine sulfate + adenosine 3',5'-bisphosphate + H(+). The catalysed reaction is 3,3',5'-triiodo-L-thyronine + 3'-phosphoadenylyl sulfate = 3,3',5'-triiodo-L-thyronine sulfate + adenosine 3',5'-bisphosphate + H(+). The enzyme catalyses 3,3'-diiodo-L-thyronine + 3'-phosphoadenylyl sulfate = 3,3'-diiodo-L-thyronine sulfate + adenosine 3',5'-bisphosphate + H(+). It carries out the reaction L-thyroxine + 3'-phosphoadenylyl sulfate = L-thyroxine sulfate + adenosine 3',5'-bisphosphate + H(+). In terms of biological role, sulfotransferase that utilizes 3'-phospho-5'-adenylyl sulfate (PAPS) as sulfonate donor to catalyze the sulfate conjugation of a wide variety of acceptor molecules bearing a hydroxyl or an amine group. Sulfonation increases the water solubility of most compounds, and therefore their renal excretion, but it can also result in bioactivation to form active metabolites. Displays broad substrate specificity for small phenolic compounds. Plays an important role in the sulfonation of endogenous molecules such as steroid hormones. Mediates also the metabolic activation of carcinogenic N-hydroxyarylamines leading to highly reactive intermediates capable of forming DNA adducts, potentially resulting in mutagenesis. May play a role in gut microbiota-host metabolic interaction. O-sulfonates 4-ethylphenol (4-EP), a dietary tyrosine-derived metabolite produced by gut bacteria. The product 4-EPS crosses the blood-brain barrier and may negatively regulate oligodendrocyte maturation and myelination, affecting the functional connectivity of different brain regions associated with the limbic system. Catalyzes the sulfate conjugation of dopamine. Catalyzes the sulfation of T4 (L-thyroxine/3,5,3',5'-tetraiodothyronine), T3 (3,5,3'-triiodothyronine), rT3 (3,3',5'-triiodothyronine) and 3,3'-T2 (3,3'-diiodothyronine), with a substrate preference of 3,3'-T2 &gt; rT3 &gt; T3 &gt; T4. The sequence is that of Sulfotransferase 1A1 (Sult1a1) from Mus musculus (Mouse).